The following is a 205-amino-acid chain: Coenzyme Q-binding protein COQ10, mitochondrial (205 aa).

The protein belongs to the COQ10 family. Interacts with coenzyme Q.

The protein resides in the mitochondrion inner membrane. Functionally, required for the function of coenzyme Q in the respiratory chain. May serve as a chaperone or may be involved in the transport of Q6 from its site of synthesis to the catalytic sites of the respiratory complexes. This Dictyostelium discoideum (Social amoeba) protein is Coenzyme Q-binding protein COQ10, mitochondrial (coq10-1).